Here is an 872-residue protein sequence, read N- to C-terminus: MSFDWLNVPGLDLSSGDQAEKRPSNGLGPPSVSFDFGINTAAPHDSSFWDQGSRSHSDTTLSYRNNHSNTAADNATNVSSPQKDNPPNGEVRTLSGGDVYAESPEDMQVPLSLSQNQLTHEEIRTYLRWYHYICLRTHGKLVRLNDVFRFLTNFNLSQKVKDRIVEIFRSCKNALNIGQFFAVLRLVSRAIIYGILPLRRMILEKAPVPKPRPILSSENHEEVYEEVEDDDSSAKTGDQKVDFDSFASLLLTGKTTRKRVRRRIKNLNFKSKKVRFSEHITFQDPPNLNQESSNNSEARKQDPDAEDEDQDSNNDSPLDFTLPMDQLLKRLYKRRKNSGLVSSLPSEQQETEEEKKVLEDMKDSLSHFKQIQTVDSASLPISSVFLQNGNTLPTSNVNNTTVPQQLPLEPLKPTATGSANHLVREEYNQGLHPSNGAIQTGLQPLKPTATGSANYLMRSHMEQPQSIKPSSTPETVTNSGGLQPLKPTATGSANYLMKQHISPSVNNPVSSMFQAQFTNQSSSPQSTGPAFLNSPNITLPQSNQQQPYQEVNPTQAKIEPSNISPQHTYSNNVRINNGNIVSMPKVEITGAFPPQNTLPQHQQSHLLSPQNTIPQHQRSQLISPQNTFTQNQPILSPQHTYSNNQATMISPQNTYTNNQQQPQHLPPPPPPRAQQQQQGAIVPPQHMYSNVQKQNNLVPTQPSYTNSPSIQSPNFLSPQNAANSYFQSLLSSSPSPNPTPSNASTVNGNNASNGISSFQNTSAAMNNTQSHQTYIQQQQQQQTQQRIYGGQLSQMQQHPGQLHLNNSDIHSQPNKPNYGMLGQQVHQQQQQQQQQFPFTADVNRSNSSDILGNLQSLQQQVDALQIQYNRRP.

2 disordered regions span residues 1 to 98 (MSFD…SGGD) and 209 to 239 (PKPR…TGDQ). The span at 48–85 (FWDQGSRSHSDTTLSYRNNHSNTAADNATNVSSPQKDN) shows a compositional bias: polar residues. Residues 272 to 276 (KKVRF) carry the KKRVK motif; Required for interaction with GLC7, endocytosis and actin cytoskeleton organization motif. Disordered stretches follow at residues 280–321 (ITFQ…LDFT) and 338–358 (SGLV…KKVL). Polar residues-rich tracts occupy residues 284 to 296 (DPPN…SNNS) and 339 to 348 (GLVSSLPSEQ). Tandem repeats lie at residues 405–424 (QLPL…HLVR), 439–458 (QTGL…YLMR), 479–498 (SGGL…YLMK), 534–545 (SPNITLPQSNQQ), 564–575 (SPQHTYSNNVRI), 593–604 (PPQNTLPQHQQS), 608–619 (SPQNTIPQHQRS), 623–634 (SPQNTFTQNQPI), 636–647 (SPQHTYSNNQAT), 650–661 (SPQNTYTNNQQQ), 683–694 (PPQHMYSNVQKQ), and 717–728 (SPQNAANSYFQS). Positions 405 to 448 (QLPLEPLKPTATGSANHLVREEYNQGLHPSNGAIQTGLQPLKPT) are 3 X 20 AA approximate repeats. Residues Thr416 and Thr450 each carry the phosphothreonine; by PRK1 modification. The disordered stretch occupies residues 460 to 489 (HMEQPQSIKPSSTPETVTNSGGLQPLKPTA). Over residues 462–481 (EQPQSIKPSSTPETVTNSGG) the composition is skewed to polar residues. Residue Thr490 is modified to Phosphothreonine; by PRK1. 2 disordered regions span residues 516 to 571 (QFTN…TYSN) and 591 to 620 (AFPP…QRSQ). The tract at residues 534–728 (SPNITLPQSN…QNAANSYFQS (195 aa)) is 9 X 12 AA approximate repeats. Ser564 bears the Phosphoserine mark. Residues 594–620 (PQNTLPQHQQSHLLSPQNTIPQHQRSQ) show a composition bias toward polar residues. The segment at 649–681 (ISPQNTYTNNQQQPQHLPPPPPPRAQQQQQGAI) is disordered. Residues 651–663 (PQNTYTNNQQQPQ) are compositionally biased toward low complexity. Polar residues predominate over residues 697 to 727 (LVPTQPSYTNSPSIQSPNFLSPQNAANSYFQ). Disordered regions lie at residues 697-758 (LVPT…ISSF) and 806-838 (NSDI…QFPF). The span at 728–745 (SLLSSSPSPNPTPSNAST) shows a compositional bias: low complexity. 2 stretches are compositionally biased toward polar residues: residues 746-758 (VNGN…ISSF) and 806-815 (NSDIHSQPNK). Residues 823-835 (QQVHQQQQQQQQQ) show a composition bias toward low complexity.

Interacts (via KKVRF motif) with phosphatase GLC7. In terms of processing, phosphorylation by PRK1 and/or AKL1 on Thr-416, Thr-450 and Thr-490 of repeats 1-1, 1-2 and/or 1-3 negatively regulates SCD5 function in endocytosis and actin cytoskeleton organization.

The protein localises to the membrane. Its function is as follows. Regulates both fluid phase and receptor-mediated endocytosis. Involved in vesicular transport at a late stage of the secretory pathway. Regulates actin cytoskeleton organization. In Saccharomyces cerevisiae (strain ATCC 204508 / S288c) (Baker's yeast), this protein is Protein SCD5 (SCD5).